We begin with the raw amino-acid sequence, 214 residues long: MASEQRWIPLESNPKVLNKYVHNLGMDAGWNFVDVFGLDPELLAMVPRPAAALVLLFPDDKETVNQLIGEYQSDYPDSLYYTKQTIGNACGTVAIVHALANNENVIPFDAAKHFKTFLEKTKPLNPEERAKHLEQDNLMGAAHGDCAQEGDTQAPSQDEHVKSHFVALVHCNGTLYELDGRKEAPVVHGTTSADTFLEDAAEVVKKFMARDPEI.

The UCH catalytic domain occupies 6–214 (RWIPLESNPK…KKFMARDPEI (209 aa)). Cys-90 serves as the catalytic Nucleophile. Catalysis depends on His-164, which acts as the Proton donor.

It belongs to the peptidase C12 family.

It is found in the cytoplasm. The enzyme catalyses Thiol-dependent hydrolysis of ester, thioester, amide, peptide and isopeptide bonds formed by the C-terminal Gly of ubiquitin (a 76-residue protein attached to proteins as an intracellular targeting signal).. In terms of biological role, ubiquitin-protein hydrolase is involved both in the processing of ubiquitin precursors and of ubiquitinated proteins. This enzyme is a thiol protease that recognizes and hydrolyzes a peptide bond at the C-terminal glycine of ubiquitin. The chain is Ubiquitin carboxyl-terminal hydrolase (UCH) from Aplysia californica (California sea hare).